The primary structure comprises 630 residues: Plastin-1 (630 aa).

Residues 1–114 (MENNVTTISR…LGGTSSISTE (114 aa)) are fimbrin headpiece. EF-hand domains follow at residues 11–46 (EELEELREAFNKIDIDNSGYVSDYELQDLFKEASLP) and 51–86 (KVREIIEKIFAVTDSNKDGKINFEEFVSLIQELKSK). Asp-24, Asp-26, Ser-28, Tyr-30, Glu-35, Asp-64, Asn-66, Asp-68, Lys-70, and Glu-75 together coordinate Ca(2+). Actin-binding regions lie at residues 108-375 (TSSI…LFNT) and 376-624 (YPAL…LMGR). Residues 115-630 (GTQHSYSEEE…LMGRGLNKIK (516 aa)) form a fimbrin core region. Calponin-homology (CH) domains follow at residues 122-238 (EEEK…KVGL), 266-377 (LSPE…NTYP), 396-505 (SNEE…RRYT), and 517-626 (KVND…GRGL).

Monomer. The N-terminus is blocked.

The protein resides in the cytoplasm. Its subcellular location is the cell projection. It is found in the stereocilium. Functionally, actin-bundling protein. In the inner ear, it is required for stereocilia formation. Mediates liquid packing of actin filaments that is necessary for stereocilia to grow to their proper dimensions. This is Plastin-1 (PLS1) from Gallus gallus (Chicken).